The sequence spans 434 residues: MVATPDDPRAQTIVDLFNGQGSAPAPFDVLTSALSFPTRDQEQWWRKTGPMFGQMLASSGYTLDQQYRHLTFYYNQLVPRLGPHPATFHSSLTVSGLPMEFSINYQQKGAHPMVRIGAEPIDSFSGTERDPFNQIPPAEMVNHFSRAGVKGFDPELYAYFEPKHSLTREQQARLPKEVPGGDKLKTQYAFGFDFKGDEVSLKGYSYPGLKATMAGQEVAKLVGDGVKDLKNQGKLDCTEAWAAVEAYMTELNGWGYHNLWAWDYVSPAKSRLKFYSFVMDVVDKTKLEELWTLNGRATSPAHQEGLRHLKELWDIIDLKNVGKRDLPADAPQIPEDAAPMVWNYEMTAGNPLPFGKGYFPLQGLNDAGCIQKLVKFFELMGWKDLAAKYPETIQSFYPGLDLSKTSHLLMWVSYTYSEKTGVYLSIYNHPCPEK.

L-tryptophan-binding positions include 91–92 (SL) and glutamate 100. The substrate site is built by arginine 115, lysine 202, and tyrosine 204. Tyrosine 206 contacts L-tryptophan. The substrate site is built by arginine 271, lysine 273, tyrosine 275, tyrosine 358, tyrosine 423, and tyrosine 427.

This sequence belongs to the tryptophan dimethylallyltransferase family. As to quaternary structure, homodimer.

The catalysed reaction is L-tryptophan + dimethylallyl diphosphate = 4-(3-methylbut-2-enyl)-L-tryptophan + diphosphate. It functions in the pathway secondary metabolite biosynthesis. Nonribosomal peptide synthase involved in the synthesis of nidulanin A and derived compounds. Nidulanin A is a tetracyclopeptide with the sequence L-Phe-L-Kyn-L-Val-D-Val and an isoprene unit N-linked to the amino group of L-kynurenine. The NRPS nlsA is responsible of the synthesis of the cyclopeptide and the prenyltransferase nptA adds the isoprene unit on the L-kynurenine residue of nidulanin A. Further modifications lead to additional oxygenated related compounds. The protein is Tryptophan dimethylallyltransferase nptA of Emericella nidulans (strain FGSC A4 / ATCC 38163 / CBS 112.46 / NRRL 194 / M139) (Aspergillus nidulans).